The primary structure comprises 518 residues: MELVLKLISSFCAIVVVILLGWRIFNWVWLRPRKLEKYLRNQGFNGNSYRLFFGDVKEMIVMLKEAKSKPINLYDDIIPRIIPLNQKIITNYGKNSFLWLGPKPMVHIMNPDHIKDVLSKFYQFQKPRHNPLTKLLATGVADAEGDRWAKHRKLINPAFHLEKLKNMLPAIYLSSSEIVTKWEEMVSTKGQFELDVLPYLETLTSDVISRTAFGSSYEEGRKIFQLQREQAELIIQASQTIYLPGMRFLPTKRNKRMKEIAKEVKIALKSIINKRLKAMEAGERSSHDDLLGILLESNSKEIKQHGNTNFGLTVDEVIEECKLFFFAGQETTSNLLVWTMILLSQHQDWQKRAKEEVLRTFGNNKPDFDGLNHLKVVNMILLEVLRLYPPILSLDRTIYEEIKLGEISLPAGVILLLPIILLHYDQEIWGDDAKEFNPERFSEGVLKATKGRVTYFPFSWGPRICIGQNFAMLEAKMAMAMILQRFSFVLSPSYAHAPHAIITLQPQYGAHLILHSLI.

The chain crosses the membrane as a helical span at residues 2 to 22 (ELVLKLISSFCAIVVVILLGW). C465 lines the heme pocket.

The protein belongs to the cytochrome P450 family. The cofactor is heme.

Its subcellular location is the membrane. Functionally, probable heme-thiolate monooxygenase. This chain is Cytochrome P450 CYP72A219, found in Panax ginseng (Korean ginseng).